We begin with the raw amino-acid sequence, 393 residues long: NAD(P)H-quinone oxidoreductase subunit H, chloroplastic (393 aa).

This sequence belongs to the complex I 49 kDa subunit family. NDH is composed of at least 16 different subunits, 5 of which are encoded in the nucleus.

It localises to the plastid. Its subcellular location is the chloroplast thylakoid membrane. The catalysed reaction is a plastoquinone + NADH + (n+1) H(+)(in) = a plastoquinol + NAD(+) + n H(+)(out). It catalyses the reaction a plastoquinone + NADPH + (n+1) H(+)(in) = a plastoquinol + NADP(+) + n H(+)(out). In terms of biological role, NDH shuttles electrons from NAD(P)H:plastoquinone, via FMN and iron-sulfur (Fe-S) centers, to quinones in the photosynthetic chain and possibly in a chloroplast respiratory chain. The immediate electron acceptor for the enzyme in this species is believed to be plastoquinone. Couples the redox reaction to proton translocation, and thus conserves the redox energy in a proton gradient. The chain is NAD(P)H-quinone oxidoreductase subunit H, chloroplastic from Fagopyrum esculentum subsp. ancestrale (Wild buckwheat).